Here is a 272-residue protein sequence, read N- to C-terminus: Phosphatidylglycerol--prolipoprotein diacylglyceryl transferase (272 aa).

Transmembrane regions (helical) follow at residues 17–37 (LAIR…LGFG), 59–79 (MLFF…VLFY), 95–115 (WEGG…MWLF), 129–149 (FIAP…FING), 176–196 (SQLY…WLFA), 202–222 (MGAV…AAEF), and 237–257 (LSMG…MVVW). Arginine 142 lines the a 1,2-diacyl-sn-glycero-3-phospho-(1'-sn-glycerol) pocket.

Belongs to the Lgt family.

The protein resides in the cell inner membrane. It catalyses the reaction L-cysteinyl-[prolipoprotein] + a 1,2-diacyl-sn-glycero-3-phospho-(1'-sn-glycerol) = an S-1,2-diacyl-sn-glyceryl-L-cysteinyl-[prolipoprotein] + sn-glycerol 1-phosphate + H(+). The protein operates within protein modification; lipoprotein biosynthesis (diacylglyceryl transfer). Its function is as follows. Catalyzes the transfer of the diacylglyceryl group from phosphatidylglycerol to the sulfhydryl group of the N-terminal cysteine of a prolipoprotein, the first step in the formation of mature lipoproteins. The chain is Phosphatidylglycerol--prolipoprotein diacylglyceryl transferase from Cupriavidus necator (strain ATCC 17699 / DSM 428 / KCTC 22496 / NCIMB 10442 / H16 / Stanier 337) (Ralstonia eutropha).